Here is a 182-residue protein sequence, read N- to C-terminus: Signal peptidase I (182 aa).

Topologically, residues 1–13 (MTKQKEKRGRRWP) are cytoplasmic. Residues 14-30 (WFVAVCVVATLRLFVFS) form a helical membrane-spanning segment. The Extracellular segment spans residues 31-182 (NYVVEGKSMM…WPFKQFAFQF (152 aa)). Residues serine 38 and lysine 79 contribute to the active site.

Belongs to the peptidase S26 family.

It localises to the cell membrane. The enzyme catalyses Cleavage of hydrophobic, N-terminal signal or leader sequences from secreted and periplasmic proteins.. The protein is Signal peptidase I (lepB) of Bacillus caldolyticus.